The following is a 970-amino-acid chain: Disease resistance protein RGA2 (970 aa).

The NB-ARC domain occupies 135–438 (RQAVRRETGS…MAHGFLLSKG (304 aa)). 182–189 (GMGGLGKT) lines the ATP pocket. LRR repeat units lie at residues 525 to 548 (FISL…IGDL), 550 to 571 (HLRY…LCKL), 573 to 594 (NLQT…ETSK), 595 to 619 (LGSL…IGSL), 638 to 662 (LGEL…KNDK), 672 to 697 (KGNL…EVKV), 752 to 777 (LPCL…DIDV), 787 to 811 (FPSL…EGEE), 813 to 832 (FPVL…LSSN), 833 to 857 (LRAL…MFKN), 859 to 882 (ANLK…LASL), 884 to 906 (ALKS…GLEG), 907 to 931 (LSSL…LQHL), and 946 to 970 (IKRC…NIYI).

Belongs to the disease resistance NB-LRR family.

Its function is as follows. Disease resistance protein. Resistance proteins guard the plant against pathogens that contain an appropriate avirulence protein via a direct or indirect interaction with this avirulence protein. That triggers a defense system which restricts the pathogen growth. Confers a broad resistance to all known races of P.infestans. The sequence is that of Disease resistance protein RGA2 (RGA2) from Solanum bulbocastanum (Wild potato).